Here is a 279-residue protein sequence, read N- to C-terminus: Energy-coupling factor transporter ATP-binding protein EcfA1 (279 aa).

The ABC transporter domain occupies 5 to 240; that stretch reads IELKKVTFNY…GDELLQLGLD (236 aa). Residue 40 to 47 coordinates ATP; it reads GHNGSGKS.

This sequence belongs to the ABC transporter superfamily. Energy-coupling factor EcfA family. Forms a stable energy-coupling factor (ECF) transporter complex composed of 2 membrane-embedded substrate-binding proteins (S component), 2 ATP-binding proteins (A component) and 2 transmembrane proteins (T component).

It localises to the cell membrane. In terms of biological role, ATP-binding (A) component of a common energy-coupling factor (ECF) ABC-transporter complex. Unlike classic ABC transporters this ECF transporter provides the energy necessary to transport a number of different substrates. The protein is Energy-coupling factor transporter ATP-binding protein EcfA1 of Streptococcus pyogenes serotype M12 (strain MGAS2096).